Consider the following 766-residue polypeptide: U3 small nucleolar RNA-associated protein 14 homolog C (766 aa).

A disordered region spans residues His14 to His42. A phosphoserine mark is found at Ser28, Ser51, Ser76, and Ser80. Lys121 participates in a covalent cross-link: Glycyl lysine isopeptide (Lys-Gly) (interchain with G-Cter in SUMO2). Thr204 carries the post-translational modification Phosphothreonine. 2 coiled-coil regions span residues Leu216–Lys245 and Leu316–Glu346. The interval Met365–Leu563 is disordered. Residues Glu396 to Ser405 are compositionally biased toward low complexity. Phosphoserine is present on residues Ser403 and Ser405. A compositionally biased stretch (basic and acidic residues) spans Ala407–Leu434. Ser443 bears the Phosphoserine mark. A Glycyl lysine isopeptide (Lys-Gly) (interchain with G-Cter in SUMO2) cross-link involves residue Lys447. Ser451 carries the phosphoserine modification. Residues Gln452–Gln470 are a coiled coil. Positions Lys466–Lys475 are enriched in basic residues. Positions Arg502–Pro527 are enriched in basic and acidic residues. Lys517 is covalently cross-linked (Glycyl lysine isopeptide (Lys-Gly) (interchain with G-Cter in SUMO2)). The span at Gly533 to Asn542 shows a compositional bias: polar residues. The span at Asp545–Gln555 shows a compositional bias: basic and acidic residues. Ser567 is subject to Phosphoserine. Lys732 participates in a covalent cross-link: Glycyl lysine isopeptide (Lys-Gly) (interchain with G-Cter in SUMO2). Residues Glu734 to Leu766 are disordered.

This sequence belongs to the UTP14 family. In terms of tissue distribution, expressed in testis.

It localises to the nucleus. It is found in the nucleolus. Functionally, essential for spermatogenesis. May be required specifically for ribosome biogenesis and hence protein synthesis during male meiosis. The sequence is that of U3 small nucleolar RNA-associated protein 14 homolog C (UTP14C) from Homo sapiens (Human).